The primary structure comprises 662 residues: MASAGKPTLDDSRRATGSPKMKARENAKDTLCRNVTIYGRCRYEDKGCAFNHDPHKVNTTYQSDSRRRLNVDSPSFTPSLLSSNGSSPTTASVTAKKAATISPKAANAAPFQPRNITSRSNTSTPSGRAETMTPDWSVAEVQEFVPQGFDTAHMASLQGNSNGGVPSTSPFDPFVTASNPLSAASAVGPVQANPFAHDTAAAAAALGGAFFAGQSGFQQPVQYHLYAPIGPHSQNTLGYQRNVHDLFLPNDFREELQKKAAATLQTLPNTQLPAQVDYFHSLVPLDLNHQKNATIFGFPSWVYKAQSSKDGNFYALRRLEGFRLTNEKAIRSVQAWKRVCNGSVVTVHDAFTSRSFQDSSLIFVTDYHPLSKTLAEQHLGAGNRFQGRHNTHIPEQVLWGYMTQIANGLKAIHSNGLAARILDPSKVLVTGKNRIRLNACAIMDVVQYDTQRSIAELQRQDLVNFGQLIVTLGANTPSVMHNPTKAMEHFTRAYSPQLKNSVFWLLNGLQKDQDRNIDIFITGISSQLMSTFDSALHLDDELTSDLSRELENGRLVRLVTKLNFVNERPEYEHDRQWSENGERYFLKMFRDYVFHQVDAQGDPVVDLGHVLSCLNKLDAGTDEKITLVSRDEQSCFVVSYKDIKKALESSFQALLKPTRRLH.

Disordered stretches follow at residues methionine 1–asparagine 26 and threonine 59–threonine 131. The segment at asparagine 26–histidine 55 adopts a C3H1-type zinc-finger fold. The segment covering aspartate 72–glycine 85 has biased composition (polar residues). Over residues serine 86–serine 102 the composition is skewed to low complexity. A compositionally biased stretch (polar residues) spans arginine 114–serine 126. A pseudokinase domain region spans residues glutamine 265–serine 525. Residues arginine 317, aspartate 366–threonine 373, and serine 425–lysine 426 contribute to the ATP site. A coiled-coil region spans residues serine 526–phenylalanine 564. The tract at residues valine 565–histidine 662 is knob domain.

It belongs to the protein kinase superfamily. PAN3 family. In terms of assembly, homodimer. Forms a heterotrimer with a catalytic subunit pan2 to form the poly(A)-nuclease (PAN) deadenylation complex. Interacts (via PAM-2 motif) with poly(A)-binding protein pab1 (via PABC domain), conferring substrate specificity of the enzyme complex.

The protein localises to the cytoplasm. Its function is as follows. Regulatory subunit of the poly(A)-nuclease (PAN) deadenylation complex, one of two cytoplasmic mRNA deadenylases involved in mRNA turnover. PAN specifically shortens poly(A) tails of RNA and the activity is stimulated by poly(A)-binding protein pab1. PAN deadenylation is followed by rapid degradation of the shortened mRNA tails by the CCR4-NOT complex. Deadenylated mRNAs are then degraded by two alternative mechanisms, namely exosome-mediated 3'-5' exonucleolytic degradation, or deadenylation-dependent mRNA decaping and subsequent 5'-3' exonucleolytic degradation by xrn1. May also be involved in post-transcriptional maturation of mRNA poly(A) tails. pan3 acts as a positive regulator for PAN activity, recruiting the catalytic subunit pan2 to mRNA via its interaction with RNA and with pab1. The protein is PAN2-PAN3 deadenylation complex subunit PAN3 of Aspergillus oryzae (strain ATCC 42149 / RIB 40) (Yellow koji mold).